We begin with the raw amino-acid sequence, 294 residues long: NAD kinase (294 aa).

The Proton acceptor role is filled by aspartate 74. Residues 74–75, lysine 79, 149–150, aspartate 179, 190–195, and alanine 214 contribute to the NAD(+) site; these read DG, NE, and TGYSLS.

This sequence belongs to the NAD kinase family. It depends on a divalent metal cation as a cofactor.

The protein localises to the cytoplasm. The enzyme catalyses NAD(+) + ATP = ADP + NADP(+) + H(+). Involved in the regulation of the intracellular balance of NAD and NADP, and is a key enzyme in the biosynthesis of NADP. Catalyzes specifically the phosphorylation on 2'-hydroxyl of the adenosine moiety of NAD to yield NADP. This Christiangramia forsetii (strain DSM 17595 / CGMCC 1.15422 / KT0803) (Gramella forsetii) protein is NAD kinase.